The sequence spans 360 residues: UDP-N-acetylglucosamine--N-acetylmuramyl-(pentapeptide) pyrophosphoryl-undecaprenol N-acetylglucosamine transferase (360 aa).

UDP-N-acetyl-alpha-D-glucosamine contacts are provided by residues 12 to 14 (TAG), Ser-198, and Gln-289.

It belongs to the glycosyltransferase 28 family. MurG subfamily.

The protein localises to the cell membrane. The catalysed reaction is Mur2Ac(oyl-L-Ala-gamma-D-Glu-L-Lys-D-Ala-D-Ala)-di-trans,octa-cis-undecaprenyl diphosphate + UDP-N-acetyl-alpha-D-glucosamine = beta-D-GlcNAc-(1-&gt;4)-Mur2Ac(oyl-L-Ala-gamma-D-Glu-L-Lys-D-Ala-D-Ala)-di-trans,octa-cis-undecaprenyl diphosphate + UDP + H(+). The protein operates within cell wall biogenesis; peptidoglycan biosynthesis. In terms of biological role, cell wall formation. Catalyzes the transfer of a GlcNAc subunit on undecaprenyl-pyrophosphoryl-MurNAc-pentapeptide (lipid intermediate I) to form undecaprenyl-pyrophosphoryl-MurNAc-(pentapeptide)GlcNAc (lipid intermediate II). The polypeptide is UDP-N-acetylglucosamine--N-acetylmuramyl-(pentapeptide) pyrophosphoryl-undecaprenol N-acetylglucosamine transferase (Streptococcus equi subsp. equi (strain 4047)).